The primary structure comprises 76 residues: Small ribosomal subunit protein bS18 (76 aa).

The protein belongs to the bacterial ribosomal protein bS18 family. Part of the 30S ribosomal subunit. Forms a tight heterodimer with protein bS6.

In terms of biological role, binds as a heterodimer with protein bS6 to the central domain of the 16S rRNA, where it helps stabilize the platform of the 30S subunit. The protein is Small ribosomal subunit protein bS18 of Alcanivorax borkumensis (strain ATCC 700651 / DSM 11573 / NCIMB 13689 / SK2).